We begin with the raw amino-acid sequence, 280 residues long: Vitamin B12-binding protein (280 aa).

The signal sequence occupies residues 1–27 (MMPLGLFPLPRAAAVLLISLLTLPAQA). The 248-residue stretch at 30 to 277 (RVISLSPSTT…QMASIPTPVA (248 aa)) folds into the Fe/B12 periplasmic-binding domain. Tyr57 is a cyanocob(III)alamin binding site. The cysteines at positions 190 and 266 are disulfide-linked.

The protein belongs to the BtuF family. In terms of assembly, the complex is composed of two ATP-binding proteins (BtuD), two transmembrane proteins (BtuC) and a solute-binding protein (BtuF).

Its subcellular location is the periplasm. Part of the ABC transporter complex BtuCDF involved in vitamin B12 import. Binds vitamin B12 and delivers it to the periplasmic surface of BtuC. This is Vitamin B12-binding protein from Yersinia pestis bv. Antiqua (strain Antiqua).